A 742-amino-acid polypeptide reads, in one-letter code: RING finger protein 145 homolog (742 aa).

The next 11 membrane-spanning stretches (helical) occupy residues 109–129, 138–158, 178–198, 233–253, 285–305, 318–338, 368–388, 395–415, 438–458, 463–483, and 533–553; these read AAII…TLPL, HFLS…YVDL, HGFH…LLEV, ACTG…PSLI, ILEL…YVEL, ILLT…ALAV, SGYT…FLGM, ILLA…LFEI, ICIA…MLAL, IYTA…IGVI, and VKVG…IVNI. The RING-type; atypical zinc finger occupies 592 to 630; sequence CAICFIEMKEEARITPCKHYFHGPCLRKWLAVKMVCPLC. Disordered regions lie at residues 642 to 684 and 722 to 742; these read KSSS…PGDM and AYES…ENNN. The segment covering 659–672 has biased composition (acidic residues); the sequence is AAVEENPENPEEQP.

It is found in the membrane. Its subcellular location is the golgi apparatus. The protein localises to the cis-Golgi network. The protein resides in the trans-Golgi network. The enzyme catalyses S-ubiquitinyl-[E2 ubiquitin-conjugating enzyme]-L-cysteine + [acceptor protein]-L-lysine = [E2 ubiquitin-conjugating enzyme]-L-cysteine + N(6)-ubiquitinyl-[acceptor protein]-L-lysine.. Its function is as follows. E3 ubiquitin ligase that catalyzes the direct transfer of ubiquitin from E2 ubiquitin-conjugating enzyme to a specific substrate. Acting downstream of probable Golgi transport protein eas-1, involved in inhibition of activation of transcription factor sbp-1, thereby playing a role in regulating AMsh glial cell size. This Caenorhabditis elegans protein is RING finger protein 145 homolog.